Here is a 188-residue protein sequence, read N- to C-terminus: Protein crossbronx-like (188 aa).

One can recognise a UBC core domain in the interval 15 to 174; it reads KQGYHILAEY…ANQVVKLHCG (160 aa).

Belongs to the ubiquitin-conjugating enzyme family. FTS subfamily.

This chain is Protein crossbronx-like, found in Drosophila simulans (Fruit fly).